The primary structure comprises 525 residues: Bifunctional purine biosynthesis protein PurH (525 aa).

An MGS-like domain is found at 1–148 (MPSNNLIKNA…KNYKNVIVIV (148 aa)).

It belongs to the PurH family.

It carries out the reaction (6R)-10-formyltetrahydrofolate + 5-amino-1-(5-phospho-beta-D-ribosyl)imidazole-4-carboxamide = 5-formamido-1-(5-phospho-D-ribosyl)imidazole-4-carboxamide + (6S)-5,6,7,8-tetrahydrofolate. It catalyses the reaction IMP + H2O = 5-formamido-1-(5-phospho-D-ribosyl)imidazole-4-carboxamide. It functions in the pathway purine metabolism; IMP biosynthesis via de novo pathway; 5-formamido-1-(5-phospho-D-ribosyl)imidazole-4-carboxamide from 5-amino-1-(5-phospho-D-ribosyl)imidazole-4-carboxamide (10-formyl THF route): step 1/1. Its pathway is purine metabolism; IMP biosynthesis via de novo pathway; IMP from 5-formamido-1-(5-phospho-D-ribosyl)imidazole-4-carboxamide: step 1/1. This is Bifunctional purine biosynthesis protein PurH from Buchnera aphidicola subsp. Acyrthosiphon pisum (strain APS) (Acyrthosiphon pisum symbiotic bacterium).